We begin with the raw amino-acid sequence, 376 residues long: 26S proteasome non-ATPase regulatory subunit 13 (376 aa).

In terms of domain architecture, PCI spans 171–338 (SYYKDALRFL…KRVHMTWVQP (168 aa)). Position 298 is an N6-acetyllysine (Lys298).

The protein belongs to the proteasome subunit S11 family. In terms of assembly, component of the 19S proteasome regulatory particle complex. The 26S proteasome consists of a 20S core particle (CP) and two 19S regulatory subunits (RP). The regulatory particle is made of a lid composed of 9 subunits including PSMD13, a base containing 6 ATPases and few additional components.

Functionally, component of the 26S proteasome, a multiprotein complex involved in the ATP-dependent degradation of ubiquitinated proteins. This complex plays a key role in the maintenance of protein homeostasis by removing misfolded or damaged proteins, which could impair cellular functions, and by removing proteins whose functions are no longer required. Therefore, the proteasome participates in numerous cellular processes, including cell cycle progression, apoptosis, or DNA damage repair. The protein is 26S proteasome non-ATPase regulatory subunit 13 of Rattus norvegicus (Rat).